A 139-amino-acid chain; its full sequence is AP-4 complex subunit sigma (139 aa).

This sequence belongs to the adaptor complexes small subunit family. As to quaternary structure, may be part of the adaptor protein complex 4 (AP-4), a heterotetramer composed of two large adaptins (epsilon-type subunitand beta-type subunit), a medium adaptin (mu-type subunit) and a small adaptin (sigma-type).

Its subcellular location is the golgi apparatus. The protein resides in the trans-Golgi network membrane. Probable component of an adaptor protein complex. Adaptor protein complexes are vesicle coat components involved both in vesicle formation and cargo selection. They control the vesicular transport of proteins in different trafficking pathways. This is AP-4 complex subunit sigma from Dictyostelium discoideum (Social amoeba).